A 193-amino-acid polypeptide reads, in one-letter code: Ribosomal RNA small subunit methyltransferase G (193 aa).

Residues G62, F67, 111–112 (IE), and R125 each bind S-adenosyl-L-methionine.

Belongs to the methyltransferase superfamily. RNA methyltransferase RsmG family.

It localises to the cytoplasm. The enzyme catalyses guanosine(527) in 16S rRNA + S-adenosyl-L-methionine = N(7)-methylguanosine(527) in 16S rRNA + S-adenosyl-L-homocysteine. Specifically methylates the N7 position of guanine in position 527 of 16S rRNA. The polypeptide is Ribosomal RNA small subunit methyltransferase G (Gluconobacter oxydans (strain 621H) (Gluconobacter suboxydans)).